The following is a 798-amino-acid chain: MQQHPDQLKLEEEPYLKGTVNTVIYHNDTNLYTVLKVKVTETSEAIEDKAVSVTGYFPALQEEETYTFYGKIVTHPKFGLQFQAEHFKKEIPTTKEGIIQYLSSDLFEGIGKKTAEEIVKKLGDSAINKILADASVLYDVPRLSKKKADTLAGALQRHQGLEQIMISLNQFGFGPQLSMKIYQAYESETLEKIQENPYQLVKDVEGIGFGKADELGSRMGLSGNHPERVKAAILYTLETTCLSEGHTYIETEQLIIDTQSLLNQSAREGQRITEMDAANAIIALGENKDIVIEDGRCYFPSLFYAEQNVAKRVKHIASQTEYENQFPESEFLLALGELEERMDVQYAPSQKEAIQKALSSPMLLLTGGPGTGKTTVIRGIVELYGELHGVSLDPSAYKKDEAFPIVLAAPTGRAAKRMSESTGLPAVTIHRLLGWNGAEGFTHTEDQPIEGKLLIIDEASMLDIWLANHLFKAIPDHIQIIIVGDEDQLPSVGPGQVLRDLLASQVIPTVRLTDIYRQAEGSSIVELAHQMKNGLLPNNLTAPTKDRSFIRCGGSQIKEVVEKVVANALKKGYTAKDIQVLAPMYRGKAGINELNVMLQDILNPPKEKRRELKFGDVVYRTGDKILQLVNQPENNVFNGDIGEITSIFYAKENTEKEDMAVVSFDGNEMTFTKKDFNQFTHAYCCSIHKSQGSEFPIVVLPVVKGYYRMLRRNLLYTAITRAKKFLILCGEEEALEWGVKNNDATVRQTSLKNRLSVQVEEMDAELEALQKELPFSVHDANIGMEGITPFDFMKEEQQ.

370 to 374 serves as a coordination point for ATP; that stretch reads GTGKT.

The protein belongs to the RecD family. RecD2 subfamily. As to quaternary structure, interacts with SSB (sbbA).

It localises to the cytoplasm. The protein resides in the nucleoid. It carries out the reaction Couples ATP hydrolysis with the unwinding of duplex DNA at the replication fork by translocating in the 5'-3' direction. This creates two antiparallel DNA single strands (ssDNA). The leading ssDNA polymer is the template for DNA polymerase III holoenzyme which synthesizes a continuous strand.. It catalyses the reaction ATP + H2O = ADP + phosphate + H(+). In terms of biological role, in vivo may favor replication restart by preventing RecA from binding to blocked replication forks, avoiding unnecessary recombination during replication restart. Acts as a negative modulator of the RecA-ssDNA filament, may dissasemble RecA threads, can act as both a positive and negative regulator of strand exchange. Probably stabilizes or aids normal replication fork progression, is important for survival after treatment with DNA-damaging agents that can result in replication fork stress. Overcomes the inhibition of replication restart by RecA/RecO, probably by displacing RecA. Increasing levels inhibit PriA-dependent DNA replication initiation (but have little effect on ongoing replication) in vitro; may act by disturbing SsbA assembly. Probably has a role in recombinational DNA repair. Does not seem to contribute to mismatch repair. Has 5'-3' helicase activity that is probably ATP-dependent. The polypeptide is ATP-dependent RecD2 DNA helicase (Bacillus subtilis (strain 168)).